The chain runs to 483 residues: MPDNHGPWGLRWRAKPSFILTTVAMGLFTDLVLYGILLPALPFTMRNRFDIPNAEIQHYTSAFLATYAGASVFFSVPAGWAASKLGSRQLFLGGLMFLVVATAIFAFSTSLVLLVVSRLLQGMSTAVVWTAGLDMVQDTVEPSQVGETIGTIFATISVGELAAPVLGGVLYERGGISAVFAVSAVLLAIDLALRALVIDKKTAVKYESPRLIRFPVERNMSDDHVASAPTVMEAQESVHEGTRLLPQVDDDGDHYKIDRELGSIVRAIPLLYCFREPRLHLAMLLSFVQALFIGTFDATVPTVAESLFHFSSLQVGLVFIALMLPYFALGRLSGQAIDRFGTKAAATSGYAFLVPCLMLLGLPEKNLVPKEANVALFCTILALNGIGLAVVTSPGYVEAIDVTTKYQVANPGHFGENGPYAQLFGFSSLYFFTGLAVGPLLGGFLRANFGNAVMGAVYAAISGVTAIVSFLFVGVRRFGPGLV.

5 helical membrane passes run 18-38 (FILTTVAMGLFTDLVLYGILL), 62-82 (AFLATYAGASVFFSVPAGWAA), 96-116 (MFLVVATAIFAFSTSLVLLVV), 149-169 (IGTIFATISVGELAAPVLGGV), and 178-198 (AVFAVSAVLLAIDLALRALVI). Residue Asn-219 is glycosylated (N-linked (GlcNAc...) asparagine). Helical transmembrane passes span 281 to 301 (LAMLLSFVQALFIGTFDATVP), 310 to 330 (FSSLQVGLVFIALMLPYFALG), 344 to 364 (AAATSGYAFLVPCLMLLGLPE), 374 to 394 (VALFCTILALNGIGLAVVTSP), 424 to 444 (FGFSSLYFFTGLAVGPLLGGF), and 453 to 473 (VMGAVYAAISGVTAIVSFLFV).

It belongs to the major facilitator superfamily. TCR/Tet family.

Its subcellular location is the membrane. MFS-type transporter; part of the gene cluster that mediates the biosynthesis of pyrrolopyrazines, secondary metabolites showing insecticidal activity. Probably involved in the secretion of peramine and other pyrrolopyrazines. The polypeptide is MFS-type transporter ppzB (Metarhizium rileyi (strain RCEF 4871) (Nomuraea rileyi)).